Here is a 748-residue protein sequence, read N- to C-terminus: Acetyl-CoA decarbonylase/synthase complex subunit beta 1 (748 aa).

The [Ni-Fe-S] cluster site is built by Cys-480, Cys-483, Cys-569, and Cys-571.

The protein belongs to the CdhC family. As to quaternary structure, monomer. The ACDS complex is made up of alpha, epsilon, beta, gamma and delta chains with a probable stoichiometry of (alpha(2)epsilon(2))(4)-beta(8)-(gamma(1)delta(1))(8) (Potential). [Ni-Fe-S] cluster serves as cofactor.

The enzyme catalyses Co(I)-[corrinoid Fe-S protein] + acetyl-CoA + H(+) = methyl-Co(III)-[corrinoid Fe-S protein] + CO + CoA. Part of a complex that catalyzes the reversible cleavage of acetyl-CoA, allowing autotrophic growth from CO(2). The alpha-epsilon complex generates CO from CO(2), while the beta subunit (this protein) combines the CO with CoA and a methyl group to form acetyl-CoA. The methyl group, which is incorporated into acetyl-CoA, is transferred to the beta subunit by a corrinoid iron-sulfur protein (the gamma-delta complex). The sequence is that of Acetyl-CoA decarbonylase/synthase complex subunit beta 1 (cdhC1) from Methanocaldococcus jannaschii (strain ATCC 43067 / DSM 2661 / JAL-1 / JCM 10045 / NBRC 100440) (Methanococcus jannaschii).